We begin with the raw amino-acid sequence, 78 residues long: Small ribosomal subunit protein bS20 (78 aa).

This sequence belongs to the bacterial ribosomal protein bS20 family.

Binds directly to 16S ribosomal RNA. In Streptococcus pneumoniae serotype 2 (strain D39 / NCTC 7466), this protein is Small ribosomal subunit protein bS20.